Consider the following 773-residue polypeptide: Membrane-bound aldehyde dehydrogenase [pyrroloquinoline-quinone] (773 aa).

A signal peptide (tat-type signal) is located at residues 1–44; the sequence is MGRLNRFRLGKDGRREQASLSRRGFLVTSLGAGVMFGFARPSSA.

The cofactor is pyrroloquinoline quinone. Predicted to be exported by the Tat system. The position of the signal peptide cleavage has been experimentally proven.

The protein resides in the cell inner membrane. It carries out the reaction an aldehyde + a quinone + H2O = a quinol + a carboxylate + H(+). The sequence is that of Membrane-bound aldehyde dehydrogenase [pyrroloquinoline-quinone] from Gluconacetobacter polyoxogenes (Acetobacter polyoxogenes).